A 477-amino-acid polypeptide reads, in one-letter code: Glycogen synthase (477 aa).

Residue K15 participates in ADP-alpha-D-glucose binding.

This sequence belongs to the glycosyltransferase 1 family. Bacterial/plant glycogen synthase subfamily.

The enzyme catalyses [(1-&gt;4)-alpha-D-glucosyl](n) + ADP-alpha-D-glucose = [(1-&gt;4)-alpha-D-glucosyl](n+1) + ADP + H(+). It functions in the pathway glycan biosynthesis; glycogen biosynthesis. In terms of biological role, synthesizes alpha-1,4-glucan chains using ADP-glucose. In Citrobacter koseri (strain ATCC BAA-895 / CDC 4225-83 / SGSC4696), this protein is Glycogen synthase.